We begin with the raw amino-acid sequence, 576 residues long: Arginine--tRNA ligase (576 aa).

A 'HIGH' region motif is present at residues 122-132 (PNVAKQMHVGH).

Belongs to the class-I aminoacyl-tRNA synthetase family. Monomer.

It is found in the cytoplasm. It catalyses the reaction tRNA(Arg) + L-arginine + ATP = L-arginyl-tRNA(Arg) + AMP + diphosphate. The polypeptide is Arginine--tRNA ligase (Yersinia pseudotuberculosis serotype O:3 (strain YPIII)).